The primary structure comprises 282 residues: MAHQLKLLKDDFFASDQQAVAVADRYPQDVFAEHTHDFCELVIVWRGNGLHVLNDRPYRITRGDLFYIHADDKHSYASVNDLVLQNIIYCPERLKLNLDWQGAIPGFSASAGQPHWRLGSVGMAQARQVIGQLEHESSQHVSFANEMAELLFGQLVMLLNRHRYTSDSLPPTSSETLLDKLITRLAASLKSPFALDKFCDEASCSERVLRQQFRQQTGMTINQYLRQVRVCHAQYLLQHSRLLISDISTECGFEDSNYFSVVFTRETGMTPSQWRHLNSQKD.

The region spanning 179–277 is the HTH araC/xylS-type domain; the sequence is DKLITRLAAS…GMTPSQWRHL (99 aa). 2 consecutive DNA-binding regions (H-T-H motif) follow at residues 196 to 217 and 244 to 267; these read DKFC…RQQT and ISDI…TRET.

In terms of assembly, binds DNA as a dimer.

The protein resides in the cytoplasm. Activates expression of the rhaSR operon in response to L-rhamnose. The chain is HTH-type transcriptional activator RhaR from Escherichia coli O139:H28 (strain E24377A / ETEC).